The primary structure comprises 309 residues: Movement protein (309 aa).

Residues 245 to 273 (HLSLNESKTLPSTSTTEAEGSERRIHIGA) are disordered. Over residues 246–262 (LSLNESKTLPSTSTTEA) the composition is skewed to polar residues.

The protein localises to the host cell junction. It localises to the host plasmodesma. Transports viral genome to neighboring plant cells directly through plasmosdesmata, without any budding. The movement protein allows efficient cell to cell propagation, by bypassing the host cell wall barrier. Acts by forming a tubular structure at the host plasmodesmata, enlarging it enough to allow free passage of virion capsids. The sequence is that of Movement protein from Solanum lycopersicum (Tomato).